We begin with the raw amino-acid sequence, 320 residues long: SUN domain-containing protein 3 (320 aa).

Topologically, residues 1–6 are nuclear; sequence MLTRSW. A helical transmembrane segment spans residues 7–29; sequence KIILSTVFISTFLLVGLLNHQWL. The Perinuclear space portion of the chain corresponds to 30 to 320; sequence KETEFPQKPR…RVHGIPSDYT (291 aa). Positions 63–102 form a coiled coil; it reads KEQQELLKKESQTLENNFREILFLIEQIDVLKALLKDMKD. One can recognise an SUN domain in the interval 156–317; that stretch reads GASVIEAGTS…YRFRVHGIPS (162 aa).

As to quaternary structure, self-associates. Interacts with SYNE1 and SPAG4/SUN4. Proposed to form a spermatogenesis-specific LINC complex with SYNE1 during sperm head formation possibly implicating a SUN domain-based heterotrimer with SPAG4/SUN4 associating with SYNE1. Can interact with SYNE3; the interaction is questioned by missing colocalization in spermatids. In terms of tissue distribution, specifically expressed in testis (at protein level).

Its subcellular location is the membrane. The protein localises to the nucleus envelope. It is found in the nucleus inner membrane. Its function is as follows. As a probable component of the LINC (LInker of Nucleoskeleton and Cytoskeleton) complex, involved in the connection between the nuclear lamina and the cytoskeleton. The nucleocytoplasmic interactions established by the LINC complex play an important role in the transmission of mechanical forces across the nuclear envelope and in nuclear movement and positioning. May be involved in nuclear remodeling during sperm head formation in spermatogenesis. A probable SUN3:SYNE1 LINC complex may tether spermatid nuclei to posterior cytoskeletal structures such as the manchette. The polypeptide is SUN domain-containing protein 3 (Sun3) (Mus musculus (Mouse)).